The chain runs to 395 residues: Phosphoglycerate kinase (395 aa).

Substrate-binding positions include 21–23 (DLN), R36, 59–62 (HLGR), R113, and R146. ATP is bound by residues K197, E324, and 350-353 (GGDT).

This sequence belongs to the phosphoglycerate kinase family. As to quaternary structure, monomer.

The protein localises to the cytoplasm. It catalyses the reaction (2R)-3-phosphoglycerate + ATP = (2R)-3-phospho-glyceroyl phosphate + ADP. Its pathway is carbohydrate degradation; glycolysis; pyruvate from D-glyceraldehyde 3-phosphate: step 2/5. This chain is Phosphoglycerate kinase, found in Acinetobacter baylyi (strain ATCC 33305 / BD413 / ADP1).